Consider the following 88-residue polypeptide: Chaplin-F (88 aa).

The signal sequence occupies residues methionine 1–alanine 36. Residues serine 47–asparagine 87 form the Chaplin domain. A disulfide bridge links cysteine 67 with cysteine 85.

The protein belongs to the chaplin family. Short chaplin subfamily. In terms of assembly, homodimer; disulfide linked. About 20% of ChpF isolated from cell wall forms disulfide-bonded homodimers.

The protein resides in the cell surface. Its subcellular location is the secreted. It localises to the cell wall. The protein localises to the fimbrium. In terms of biological role, one of 8 partially redundant surface-active proteins required for efficient formation of aerial mycelium; the short chaplins assemble into a hydrophobic, amyloidal fibrillar surface layer that envelopes and protects aerial hyphae and spores, presumably anchored to the long chaplins. Chaplins have an overlapping function with the surface-active SapB peptide; chaplins are essential on minimal medium while on rich medium both chaplins and SapB are required for efficient aerial hyphae formation. Chaplins are also involved in cell attachment to a hydrophobic surface. Forms amyloid fibrils in vitro probably composed of stacked beta-sheets, at low extracellular concentrations individually restores the ability to form aerial hyphae to a chaplin-deficient strain. A small chaplin extract (ChpD, ChpE, ChpF, ChpG and ChpH) self-assembles into 2 different amyloids; small fibrils at the air-water interface form an amphipathic membrane that resembles spore-surface structures involved in aerial hyphae formation, and hydrophilic fibrils in solution that resemble the fibers that attach cells to a hydrophobic surface. At the air-water interface the hydrophilic surface is in contact with water (probably equivalent to the peptidoglycan layer), while the hydrophobic face is exposed to the air, making the surface of the aerial hyphae hydrophobic. A small chaplin extract applied to a chaplin-deficient strain restores aerial hyphae formation. The small chaplin extract forms an amyloid-like structure similar to that seen on the surface of cells without rodlets (rdlA-rdlB deletions), and is highly surface active, reducing surface tension from 72 to 26 mJ/m(2), which probably allows escape of hyphae from an aqueous environment into air. ChpF alone is less surface active at pH 3.0 than at pH 10.0, it reduces the surface tension of water from 72.8 mN/m to 50 mN/m at pH 3.0 or to 37 mN/m at pH 10.0. ChpF and ChpG are sufficient to restore the rodlet layer and hydrophobicity to a strain deleted for the other 6 chaplin genes. The polypeptide is Chaplin-F (Streptomyces coelicolor (strain ATCC BAA-471 / A3(2) / M145)).